The chain runs to 466 residues: Asparagine--tRNA ligase (466 aa).

Belongs to the class-II aminoacyl-tRNA synthetase family. Homodimer.

It is found in the cytoplasm. The enzyme catalyses tRNA(Asn) + L-asparagine + ATP = L-asparaginyl-tRNA(Asn) + AMP + diphosphate + H(+). The chain is Asparagine--tRNA ligase from Vibrio parahaemolyticus serotype O3:K6 (strain RIMD 2210633).